The following is a 98-amino-acid chain: Integration host factor subunit alpha (98 aa).

Belongs to the bacterial histone-like protein family. Heterodimer of an alpha and a beta chain.

In terms of biological role, this protein is one of the two subunits of integration host factor, a specific DNA-binding protein that functions in genetic recombination as well as in transcriptional and translational control. The chain is Integration host factor subunit alpha from Marinomonas sp. (strain MWYL1).